The primary structure comprises 160 residues: Epithelial membrane protein 1 (160 aa).

Residues 1–21 (MLVLLAGLFVVHIATAIMLFV) form a helical membrane-spanning segment. An N-linked (GlcNAc...) asparagine glycan is attached at Asn-43. A run of 3 helical transmembrane segments spans residues 67 to 87 (FMIL…FQLF), 95 to 115 (FFLS…GVSI), and 137 to 157 (FILT…YMVL).

This sequence belongs to the PMP-22/EMP/MP20 family. In terms of tissue distribution, most prominently found in the gastrointestinal tract, skin, lung, and brain but not in liver.

It localises to the membrane. The polypeptide is Epithelial membrane protein 1 (Emp1) (Rattus norvegicus (Rat)).